Here is a 429-residue protein sequence, read N- to C-terminus: Metacaspase-1A (429 aa).

The interval 1-68 is disordered; it reads MQHHHQGSYG…PQHNGGQMYG (68 aa). The span at 8–19 shows a compositional bias: gly residues; that stretch reads SYGGGGGGGGYP. Low complexity predominate over residues 20 to 45; it reads GQAYREQNPYGYGQQSPQQGYGAPQQ. The segment covering 46-62 has biased composition (polar residues); the sequence is HNGYNQPPSGYGQPQHN. Active-site residues include His-220 and Cys-276.

It belongs to the peptidase C14B family.

Involved in cell death (apoptosis). The protein is Metacaspase-1A (casA) of Aspergillus clavatus (strain ATCC 1007 / CBS 513.65 / DSM 816 / NCTC 3887 / NRRL 1 / QM 1276 / 107).